A 633-amino-acid polypeptide reads, in one-letter code: 1-deoxy-D-xylulose-5-phosphate synthase (633 aa).

Thiamine diphosphate contacts are provided by residues His72 and 113-115 (GHS). Asp144 lines the Mg(2+) pocket. Residues 145-146 (GA), Asn173, Tyr284, and Glu367 contribute to the thiamine diphosphate site. Residue Asn173 participates in Mg(2+) binding.

Belongs to the transketolase family. DXPS subfamily. Homodimer. The cofactor is Mg(2+). Thiamine diphosphate serves as cofactor.

The catalysed reaction is D-glyceraldehyde 3-phosphate + pyruvate + H(+) = 1-deoxy-D-xylulose 5-phosphate + CO2. It participates in metabolic intermediate biosynthesis; 1-deoxy-D-xylulose 5-phosphate biosynthesis; 1-deoxy-D-xylulose 5-phosphate from D-glyceraldehyde 3-phosphate and pyruvate: step 1/1. In terms of biological role, catalyzes the acyloin condensation reaction between C atoms 2 and 3 of pyruvate and glyceraldehyde 3-phosphate to yield 1-deoxy-D-xylulose-5-phosphate (DXP). In Lysinibacillus sphaericus (strain C3-41), this protein is 1-deoxy-D-xylulose-5-phosphate synthase.